The sequence spans 120 residues: Large ribosomal subunit protein bL19 (120 aa).

The protein belongs to the bacterial ribosomal protein bL19 family.

This protein is located at the 30S-50S ribosomal subunit interface and may play a role in the structure and function of the aminoacyl-tRNA binding site. The polypeptide is Large ribosomal subunit protein bL19 (Kocuria rhizophila (strain ATCC 9341 / DSM 348 / NBRC 103217 / DC2201)).